Reading from the N-terminus, the 275-residue chain is Diaminopimelate epimerase (275 aa).

Positions 12, 45, and 65 each coordinate substrate. Catalysis depends on Cys-74, which acts as the Proton donor. Substrate-binding positions include 75–76 (GN), Asn-158, Asn-191, and 209–210 (ER). Cys-218 functions as the Proton acceptor in the catalytic mechanism. 219-220 (GT) lines the substrate pocket.

This sequence belongs to the diaminopimelate epimerase family. As to quaternary structure, homodimer.

The protein localises to the cytoplasm. It carries out the reaction (2S,6S)-2,6-diaminopimelate = meso-2,6-diaminopimelate. Its pathway is amino-acid biosynthesis; L-lysine biosynthesis via DAP pathway; DL-2,6-diaminopimelate from LL-2,6-diaminopimelate: step 1/1. In terms of biological role, catalyzes the stereoinversion of LL-2,6-diaminopimelate (L,L-DAP) to meso-diaminopimelate (meso-DAP), a precursor of L-lysine and an essential component of the bacterial peptidoglycan. The polypeptide is Diaminopimelate epimerase (Shewanella sp. (strain MR-4)).